The primary structure comprises 130 residues: Nascent polypeptide-associated complex protein (130 aa).

The 69-residue stretch at 6–74 (GMNPRKMQQM…PVERDAADAI (69 aa)) folds into the NAC-A/B domain. The interval 65–91 (PVERDAADAIEAAPADDSDDTDDDDAI) is disordered. Positions 78-90 (PADDSDDTDDDDA) are enriched in acidic residues.

This sequence belongs to the NAC-alpha family. Homodimer. Interacts with the ribosome. Binds ribosomal RNA.

In terms of biological role, contacts the emerging nascent chain on the ribosome. The sequence is that of Nascent polypeptide-associated complex protein from Halobacterium salinarum (strain ATCC 700922 / JCM 11081 / NRC-1) (Halobacterium halobium).